A 359-amino-acid polypeptide reads, in one-letter code: 3-dehydroquinate synthase (359 aa).

NAD(+) contacts are provided by residues 72 to 77 (DGEQYK), 106 to 110 (GVIGD), 130 to 131 (TT), Lys-143, Lys-152, and 170 to 173 (CLKT). Zn(2+) is bound by residues Glu-185, His-248, and His-265.

It belongs to the sugar phosphate cyclases superfamily. Dehydroquinate synthase family. Co(2+) is required as a cofactor. Zn(2+) serves as cofactor. It depends on NAD(+) as a cofactor.

Its subcellular location is the cytoplasm. It carries out the reaction 7-phospho-2-dehydro-3-deoxy-D-arabino-heptonate = 3-dehydroquinate + phosphate. Its pathway is metabolic intermediate biosynthesis; chorismate biosynthesis; chorismate from D-erythrose 4-phosphate and phosphoenolpyruvate: step 2/7. Functionally, catalyzes the conversion of 3-deoxy-D-arabino-heptulosonate 7-phosphate (DAHP) to dehydroquinate (DHQ). This chain is 3-dehydroquinate synthase, found in Photobacterium profundum (strain SS9).